The sequence spans 109 residues: RNA-binding protein Hfq (109 aa).

The Sm domain occupies 9–68; the sequence is DPFLNALRKEKVSVSVYLVNGIKLQGQVEAFDQFCIVLRNTVNQMVYKHAISTIVPAKSV. Residues 77-109 form a disordered region; it reads PYHQNSNDEQDENVDDIHSDDLEIQENEGNIHE.

This sequence belongs to the Hfq family. In terms of assembly, homohexamer.

RNA chaperone that binds small regulatory RNA (sRNAs) and mRNAs to facilitate mRNA translational regulation in response to envelope stress, environmental stress and changes in metabolite concentrations. Also binds with high specificity to tRNAs. The protein is RNA-binding protein Hfq of Francisella tularensis subsp. holarctica (strain FTNF002-00 / FTA).